A 619-amino-acid polypeptide reads, in one-letter code: Chaperone protein HscA homolog (619 aa).

Belongs to the heat shock protein 70 family.

Its function is as follows. Chaperone involved in the maturation of iron-sulfur cluster-containing proteins. Has a low intrinsic ATPase activity which is markedly stimulated by HscB. This is Chaperone protein HscA homolog from Methylococcus capsulatus (strain ATCC 33009 / NCIMB 11132 / Bath).